Here is a 189-residue protein sequence, read N- to C-terminus: Cell division protein SepF (189 aa).

The segment at 25–70 (ESRVQQQAVKPSNSRPAQQEPVRDIKQPRLVSSSSQHVTNTPSSNE) is disordered. Polar residues-rich tracts occupy residues 27–41 (RVQQQAVKPSNSRPA) and 54–70 (LVSSSSQHVTNTPSSNE).

This sequence belongs to the SepF family. In terms of assembly, homodimer. Interacts with FtsZ.

It is found in the cytoplasm. Cell division protein that is part of the divisome complex and is recruited early to the Z-ring. Probably stimulates Z-ring formation, perhaps through the cross-linking of FtsZ protofilaments. Its function overlaps with FtsA. The chain is Cell division protein SepF from Streptococcus gordonii (strain Challis / ATCC 35105 / BCRC 15272 / CH1 / DL1 / V288).